A 156-amino-acid chain; its full sequence is MPRRRVAAKREILDDPKYGSQILAKFMNHVMESGKKAVAERIVYGALEKVKERKNSDPLEIFEKALDAIAPLVEVKSRRVGGATYQVPVEVRPSRRNALAMRWLVDFARKRGEKSMALRLAGELLDAAEGKGAAVKKREDVHRMAEANKAFSHYRF.

Belongs to the universal ribosomal protein uS7 family. As to quaternary structure, part of the 30S ribosomal subunit. Contacts proteins S9 and S11.

Functionally, one of the primary rRNA binding proteins, it binds directly to 16S rRNA where it nucleates assembly of the head domain of the 30S subunit. Is located at the subunit interface close to the decoding center, probably blocks exit of the E-site tRNA. The polypeptide is Small ribosomal subunit protein uS7 (Pseudomonas fluorescens (strain ATCC BAA-477 / NRRL B-23932 / Pf-5)).